We begin with the raw amino-acid sequence, 411 residues long: Cytosolic Fe-S cluster assembly factor narfl (411 aa).

Residues Cys-11, Cys-124, Cys-180, Cys-329, and Cys-333 each contribute to the [4Fe-4S] cluster site.

This sequence belongs to the NARF family. As to quaternary structure, component of the CIA complex.

Component of the cytosolic iron-sulfur protein assembly (CIA) complex, a multiprotein complex that mediates the incorporation of iron-sulfur cluster into extramitochondrial Fe/S proteins. In Danio rerio (Zebrafish), this protein is Cytosolic Fe-S cluster assembly factor narfl (narfl).